Reading from the N-terminus, the 524-residue chain is Leukotriene-B4 omega-hydroxylase 3 (524 aa).

Glutamate 328 and cysteine 468 together coordinate heme.

It belongs to the cytochrome P450 family. Requires heme as cofactor.

It localises to the endoplasmic reticulum membrane. Its subcellular location is the microsome membrane. The enzyme catalyses leukotriene B4 + reduced [NADPH--hemoprotein reductase] + O2 = 20-hydroxy-leukotriene B4 + oxidized [NADPH--hemoprotein reductase] + H2O + H(+). It functions in the pathway lipid metabolism; leukotriene B4 degradation. Cytochromes P450 are a group of heme-thiolate monooxygenases. Catalyzes the omega-hydroxylation of LTB4. The chain is Leukotriene-B4 omega-hydroxylase 3 (Cyp4f14) from Mus musculus (Mouse).